A 294-amino-acid polypeptide reads, in one-letter code: Store-operated calcium entry regulator STIMATE (294 aa).

The segment at 1–22 (MQGPAGNASRGLPGGPPSTVAS) is disordered. The Cytoplasmic portion of the chain corresponds to 1–28 (MQGPAGNASRGLPGGPPSTVASGAGRCE). A run of 3 helical transmembrane segments spans residues 29–49 (SGALMHSFGIFLQGLLGVVAF), 69–89 (IWFLDTSKQAIGMLFIHFANV), and 102–122 (LYLINFLLDATVGMLLIYVGV). Positions 149–153 (GAWVG) match the GXXXG motif motif. The next 2 membrane-spanning stretches (helical) occupy residues 156 to 176 (ALYIVIMIFEKSVVFIVLLIL) and 194 to 214 (LAIVMLIVPFFVNALMFWVVD). Topologically, residues 215–294 (NFLMRKGKTK…KKKHRFGLPV (80 aa)) are cytoplasmic. A disordered region spans residues 227 to 268 (LEERGANQDSRNGSKVRYRRAASHEESESEILISADDEMEES). A required for localization in the endoplasmic reticulum region spans residues 241–246 (KVRYRR).

It belongs to the STIMATE family. Homooligomer. Interacts with STIM1. In terms of tissue distribution, widely expressed.

The protein resides in the endoplasmic reticulum membrane. Functionally, acts as a regulator of store-operated Ca(2+) entry (SOCE) at junctional sites that connect the endoplasmic reticulum (ER) and plasma membrane (PM), called ER-plasma membrane (ER-PM) junction or cortical ER. SOCE is a Ca(2+) influx following depletion of intracellular Ca(2+) stores. Acts by interacting with STIM1, promoting STIM1 conformational switch. Involved in STIM1 relocalization to ER-PM junctions. Contributes to the maintenance and reorganization of store-dependent ER-PM junctions. The sequence is that of Store-operated calcium entry regulator STIMATE from Homo sapiens (Human).